We begin with the raw amino-acid sequence, 257 residues long: Imidazole glycerol phosphate synthase subunit HisF (257 aa).

Residues D12 and D131 contribute to the active site.

It belongs to the HisA/HisF family. Heterodimer of HisH and HisF.

It is found in the cytoplasm. The catalysed reaction is 5-[(5-phospho-1-deoxy-D-ribulos-1-ylimino)methylamino]-1-(5-phospho-beta-D-ribosyl)imidazole-4-carboxamide + L-glutamine = D-erythro-1-(imidazol-4-yl)glycerol 3-phosphate + 5-amino-1-(5-phospho-beta-D-ribosyl)imidazole-4-carboxamide + L-glutamate + H(+). It participates in amino-acid biosynthesis; L-histidine biosynthesis; L-histidine from 5-phospho-alpha-D-ribose 1-diphosphate: step 5/9. IGPS catalyzes the conversion of PRFAR and glutamine to IGP, AICAR and glutamate. The HisF subunit catalyzes the cyclization activity that produces IGP and AICAR from PRFAR using the ammonia provided by the HisH subunit. This Paraburkholderia phymatum (strain DSM 17167 / CIP 108236 / LMG 21445 / STM815) (Burkholderia phymatum) protein is Imidazole glycerol phosphate synthase subunit HisF.